The chain runs to 337 residues: DNA-directed RNA polymerase subunit alpha (337 aa).

Residues 1-233 (MIQKNWQELI…DQLSIFVNFE (233 aa)) are alpha N-terminal domain (alpha-NTD). Positions 249-337 (FNPVLLKKVD…DLAKRYEDQY (89 aa)) are alpha C-terminal domain (alpha-CTD).

It belongs to the RNA polymerase alpha chain family. In terms of assembly, homodimer. The RNAP catalytic core consists of 2 alpha, 1 beta, 1 beta' and 1 omega subunit. When a sigma factor is associated with the core the holoenzyme is formed, which can initiate transcription.

The enzyme catalyses RNA(n) + a ribonucleoside 5'-triphosphate = RNA(n+1) + diphosphate. DNA-dependent RNA polymerase catalyzes the transcription of DNA into RNA using the four ribonucleoside triphosphates as substrates. This chain is DNA-directed RNA polymerase subunit alpha, found in Brucella canis (strain ATCC 23365 / NCTC 10854 / RM-666).